A 409-amino-acid chain; its full sequence is Tryptophan synthase beta chain 1 (409 aa).

Position 104 is an N6-(pyridoxal phosphate)lysine (Lys-104).

The protein belongs to the TrpB family. As to quaternary structure, tetramer of two alpha and two beta chains. Pyridoxal 5'-phosphate serves as cofactor.

The catalysed reaction is (1S,2R)-1-C-(indol-3-yl)glycerol 3-phosphate + L-serine = D-glyceraldehyde 3-phosphate + L-tryptophan + H2O. Its pathway is amino-acid biosynthesis; L-tryptophan biosynthesis; L-tryptophan from chorismate: step 5/5. The beta subunit is responsible for the synthesis of L-tryptophan from indole and L-serine. In Nostoc sp. (strain PCC 7120 / SAG 25.82 / UTEX 2576), this protein is Tryptophan synthase beta chain 1 (trpB1).